We begin with the raw amino-acid sequence, 513 residues long: Maturase K (513 aa).

This sequence belongs to the intron maturase 2 family. MatK subfamily.

Its subcellular location is the plastid. The protein localises to the chloroplast. Functionally, usually encoded in the trnK tRNA gene intron. Probably assists in splicing its own and other chloroplast group II introns. This Molinia caerulea (Purple moor-grass) protein is Maturase K.